The sequence spans 124 residues: Small ribosomal subunit protein bS6 (124 aa).

Residues 97 to 124 (TGPSPMMKEVQREEAKKAAAAQPTEAQA) form a disordered region. Residues 114-124 (AAAAQPTEAQA) are compositionally biased toward low complexity.

The protein belongs to the bacterial ribosomal protein bS6 family.

Binds together with bS18 to 16S ribosomal RNA. The protein is Small ribosomal subunit protein bS6 of Paraburkholderia phymatum (strain DSM 17167 / CIP 108236 / LMG 21445 / STM815) (Burkholderia phymatum).